A 149-amino-acid polypeptide reads, in one-letter code: IQ domain-containing protein F5 (149 aa).

IQ domains are found at residues 12–41 and 68–97; these read ENKAIVSIQAWWRGTLVRRTLLHAALRAWI and QEWAVVKLQSWVRMWCIRLRYLRLLHAVRI.

The protein is IQ domain-containing protein F5 (IQCF5) of Bos taurus (Bovine).